The following is a 1371-amino-acid chain: MRGLACLLAMLVGIQAIERLRLADGPHGCAGRLEVWHSGRWGTVCDDGWDLRDAEVACRVLGCGGALAAPGGAFFGEGTGPVWLSELNCRGNEGQLGICPHRGWKAHICSHEEDAGVVCVGQRAANSREDSMSLLDGDPWLALSGELSPSSEEPPITHAPQPAASSQNGPRKKNPRPPKQTKSTRAPVLTNGAPHQERLRLVSGPHGCAGRLEVWHGGRWGTVCDDGWDLRDAAVACRELGCGGALAAPGGARFGPGEGPVWMDDVGCGGGEEALRDCPRSPWGRSNCDHTEDAGLVCTGPAPRIRLADGPHGCAGRLEVWHGGRWGSVCDDAWDLRDAAVACKELGCGGALAAPGGAFFGEGTGPIILDDLRCRGNETALRFCPARPWGQHDCHHREDAGAVCDGMPLGAVQPTVPAVDSNSTAHRLLSTSVGQMPGPAGPWPPSASPTAPPEPGPEAGSPQLRLVAGPSRCSGRLEVWHDGRWGTVCDDSWDMRDSAVVCRELGCGRPRQPDPAAGRFGWGAGPIWLDDVGCMGTEASLSECPAASWGKHNCAHNEDVGVTCTGTPGLDTISDPFSWSWLPGLGRDQDAWLPGELTTKPSASLTSSVPQKPTKVPGKAPKSTKKWVTKNARRPTTQPPGMPTTKHSRAPGTPTSLHPTARTSELPKRLTTEAPHRQTSHTTVRLTPRVPWEWTSEPVVSQSTQGPQEVTSEATTTENPQTSLEPSGENTEGSLESSQDPATTPTAGVPVPSGPFRVRLADGPNRCAGRLEVWHAGLWGTVCDDSWDIRDATVACWELGCGKVRPRVGKTHYGPGTGPIWLDDMGCKGSEMSLSDCPSGAWGKHNCDHEEDVVLTCTGYTGDDDYPSWTWDPTSGEDLTKGTTVAARPGHTLSWATTTNTEVPSPATQNLPDTDDQGGYESSWTWDTPSGRGLFKGTPTTTKPGSTVTTSTSKSPGHPFPAPRARAGSPRKPTPERRPLPTSATTSSPASSSSPEPSGSRQTSGSWPQLIPDSKQEGTSSSPKPSLLTPGLPSPATFALSTPNTSLLPTRSPELSGSPTPTSPEGLTSASSMLSEVSRLSPTSELTPGPDTTPAPEIIPESSDSSDLPMNTRTPTQPFTASHPTSIPQLNTTSYPTIAPQPTTNPQQPRSPHPATSPQPPTNTHPSSTPATPTESLPSSRKTELSSPTKPRLNSELTFEEAPSTDASQTQNLELFLASESGPSSPSPASNLDPLPTDAFKPPRSQTLHSASDHLTQGPTPNHNPDPFGPCVSPLPPVRVMACEPPALVELVGAVREVGDQLQRLTWVLEQDRQERQVLALGLAQLVEAAQGLGQLSETVKRLAEVAWPPSTPVPMTTTTEEEERPLRGDV.

The signal sequence occupies residues 1–16 (MRGLACLLAMLVGIQA). The SRCR 1 domain occupies 20-120 (LRLADGPHGC…HEEDAGVVCV (101 aa)). 3 disulfides stabilise this stretch: Cys45–Cys109, Cys58–Cys119, and Cys89–Cys99. Residues 143 to 154 (LSGELSPSSEEP) are compositionally biased toward low complexity. Positions 143 to 200 (LSGELSPSSEEPPITHAPQPAASSQNGPRKKNPRPPKQTKSTRAPVLTNGAPHQERLR) are disordered. SRCR domains are found at residues 199–299 (LRLV…LVCT) and 305–405 (IRLA…AVCD). 6 cysteine pairs are disulfide-bonded: Cys224–Cys288, Cys237–Cys298, Cys268–Cys278, Cys330–Cys394, Cys343–Cys404, and Cys374–Cys384. 2 N-linked (GlcNAc...) asparagine glycosylation sites follow: Asn377 and Asn422. The tract at residues 431 to 466 (TSVGQMPGPAGPWPPSASPTAPPEPGPEAGSPQLRL) is disordered. A compositionally biased stretch (pro residues) spans 439 to 456 (PAGPWPPSASPTAPPEPG). In terms of domain architecture, SRCR 4 spans 464-565 (LRLVAGPSRC…HNEDVGVTCT (102 aa)). Cystine bridges form between Cys489–Cys554, Cys502–Cys564, and Cys534–Cys544. Residues 592 to 756 (WLPGELTTKP…AGVPVPSGPF (165 aa)) are disordered. Over residues 599–611 (TKPSASLTSSVPQ) the composition is skewed to polar residues. The span at 622-633 (KSTKKWVTKNAR) shows a compositional bias: basic residues. Residues 653–663 (TPTSLHPTART) show a composition bias toward polar residues. Residues 665-676 (ELPKRLTTEAPH) are compositionally biased toward basic and acidic residues. The span at 698–740 (PVVSQSTQGPQEVTSEATTTENPQTSLEPSGENTEGSLESSQD) shows a compositional bias: polar residues. Residues 741–755 (PATTPTAGVPVPSGP) show a composition bias toward low complexity. Residues 758-858 (VRLADGPNRC…HEEDVVLTCT (101 aa)) enclose the SRCR 5 domain. 3 cysteine pairs are disulfide-bonded: Cys783–Cys847, Cys796–Cys857, and Cys827–Cys837. Disordered stretches follow at residues 888–1270 (RPGH…PFGP) and 1351–1371 (STPV…RGDV). The span at 894–912 (SWATTTNTEVPSPATQNLP) shows a compositional bias: polar residues. 3 stretches are compositionally biased toward low complexity: residues 936 to 957 (KGTP…KSPG), 981 to 1004 (PTSA…RQTS), and 1018 to 1035 (GTSS…LPSP). 2 stretches are compositionally biased toward polar residues: residues 1039 to 1086 (ALST…TSEL) and 1102 to 1148 (SSDS…NPQQ). N-linked (GlcNAc...) asparagine glycosylation is found at Asn1044 and Asn1131. The span at 1149 to 1163 (PRSPHPATSPQPPTN) shows a compositional bias: pro residues. Polar residues predominate over residues 1164-1189 (THPSSTPATPTESLPSSRKTELSSPT). The segment covering 1218-1230 (ASESGPSSPSPAS) has biased composition (low complexity). The span at 1244 to 1261 (RSQTLHSASDHLTQGPTP) shows a compositional bias: polar residues.

In terms of assembly, interacts with LGALS1 and laminin. Post-translationally, partially N- and O-glycosylated. Detected throughout the gastrointestinal and genitourinary tracts, in serosal salivary gland, the exocrine part of pancreas and testis, as well as in a few tubular structures in kidney. Not detected in lung and heart (at protein level). Strongly expressed in testis, kidney and pancreas, with lower levels detected in bone marrow, spleen, lung, liver, colon, stomach and skeletal muscle. Very low levels or no expression detected in thymus, esophagus, jejunum, ileum, duodenum, ovary, uterus, heart, trachea, brain, cerebellum and bladder.

It is found in the secreted. It localises to the cytoplasm. Binds to extracellular matrix proteins. Binds to pathogen-associated molecular patterns (PAMPs) present on the cell walls of Gram-positive and Gram-negative bacteria and fungi, behaving as a pattern recognition receptor (PRR). Induces bacterial and fungal aggregation and subsequent inhibition of PAMP-induced cytokine release. Does not possess intrinsic bactericidal activity. May play a role in the innate defense and homeostasis of certain epithelial surfaces. This chain is Soluble scavenger receptor cysteine-rich domain-containing protein SSC5D (Ssc5d), found in Mus musculus (Mouse).